The chain runs to 280 residues: Manganese transport system membrane protein MntC (280 aa).

9 helical membrane-spanning segments follow: residues 16 to 36, 41 to 61, 62 to 82, 92 to 112, 137 to 157, 168 to 188, 193 to 213, 221 to 241, and 244 to 264; these read ALIT…FIIL, LMGD…YMMG, MNFF…IGFV, TAIG…ISFA, TIII…EFLV, YGLN…LVTV, TVGI…AYLL, IVLA…FSYI, and LASG…AFLF.

Belongs to the ABC-3 integral membrane protein family.

Its subcellular location is the cell membrane. Functionally, this protein is probably a component of a manganese permease, a binding protein-dependent, ATP-driven transport system. In Listeria monocytogenes serovar 1/2a (strain ATCC BAA-679 / EGD-e), this protein is Manganese transport system membrane protein MntC (mntC).